Consider the following 193-residue polypeptide: dCTP deaminase, dUMP-forming (193 aa).

DCTP-binding positions include 101-106, Asp119, 127-129, Gln148, Tyr162, and Gln174; these read KSSLGR and TLE. Glu129 (proton donor/acceptor) is an active-site residue. Residues 161–184 are disordered; it reads PYGSETTGSHYQGQRGPTPSRSYQ.

It belongs to the dCTP deaminase family. In terms of assembly, homotrimer.

The catalysed reaction is dCTP + 2 H2O = dUMP + NH4(+) + diphosphate. The protein operates within pyrimidine metabolism; dUMP biosynthesis; dUMP from dCTP: step 1/1. Functionally, bifunctional enzyme that catalyzes both the deamination of dCTP to dUTP and the hydrolysis of dUTP to dUMP without releasing the toxic dUTP intermediate. This is dCTP deaminase, dUMP-forming from Bifidobacterium animalis subsp. lactis (strain AD011).